We begin with the raw amino-acid sequence, 187 residues long: UPF0301 protein VF_0434 (187 aa).

This sequence belongs to the UPF0301 (AlgH) family.

This Aliivibrio fischeri (strain ATCC 700601 / ES114) (Vibrio fischeri) protein is UPF0301 protein VF_0434.